A 520-amino-acid polypeptide reads, in one-letter code: Non-structural protein PNS7 (520 aa).

In Catharanthus roseus (Madagascar periwinkle), this protein is Non-structural protein PNS7 (S6).